The following is a 255-amino-acid chain: Thiazole synthase (255 aa).

The active-site Schiff-base intermediate with DXP is the Lys-97. Residues Gly-158, 184–185 (AG), and 206–207 (NT) contribute to the 1-deoxy-D-xylulose 5-phosphate site.

Belongs to the ThiG family. In terms of assembly, homotetramer. Forms heterodimers with either ThiH or ThiS.

It localises to the cytoplasm. It carries out the reaction [ThiS sulfur-carrier protein]-C-terminal-Gly-aminoethanethioate + 2-iminoacetate + 1-deoxy-D-xylulose 5-phosphate = [ThiS sulfur-carrier protein]-C-terminal Gly-Gly + 2-[(2R,5Z)-2-carboxy-4-methylthiazol-5(2H)-ylidene]ethyl phosphate + 2 H2O + H(+). It functions in the pathway cofactor biosynthesis; thiamine diphosphate biosynthesis. In terms of biological role, catalyzes the rearrangement of 1-deoxy-D-xylulose 5-phosphate (DXP) to produce the thiazole phosphate moiety of thiamine. Sulfur is provided by the thiocarboxylate moiety of the carrier protein ThiS. In vitro, sulfur can be provided by H(2)S. This Moorella thermoacetica (strain ATCC 39073 / JCM 9320) protein is Thiazole synthase.